Reading from the N-terminus, the 189-residue chain is Elongation factor P (189 aa).

This sequence belongs to the elongation factor P family.

The protein localises to the cytoplasm. The protein operates within protein biosynthesis; polypeptide chain elongation. Its function is as follows. Involved in peptide bond synthesis. Stimulates efficient translation and peptide-bond synthesis on native or reconstituted 70S ribosomes in vitro. Probably functions indirectly by altering the affinity of the ribosome for aminoacyl-tRNA, thus increasing their reactivity as acceptors for peptidyl transferase. This is Elongation factor P from Pseudomonas fluorescens (strain Pf0-1).